The following is a 407-amino-acid chain: Phosphopentomutase (407 aa).

6 residues coordinate Mn(2+): Asp-11, Asp-305, His-310, Asp-346, His-347, and His-358.

The protein belongs to the phosphopentomutase family. It depends on Mn(2+) as a cofactor.

It is found in the cytoplasm. The catalysed reaction is 2-deoxy-alpha-D-ribose 1-phosphate = 2-deoxy-D-ribose 5-phosphate. The enzyme catalyses alpha-D-ribose 1-phosphate = D-ribose 5-phosphate. It functions in the pathway carbohydrate degradation; 2-deoxy-D-ribose 1-phosphate degradation; D-glyceraldehyde 3-phosphate and acetaldehyde from 2-deoxy-alpha-D-ribose 1-phosphate: step 1/2. Functionally, isomerase that catalyzes the conversion of deoxy-ribose 1-phosphate (dRib-1-P) and ribose 1-phosphate (Rib-1-P) to deoxy-ribose 5-phosphate (dRib-5-P) and ribose 5-phosphate (Rib-5-P), respectively. The polypeptide is Phosphopentomutase (Legionella pneumophila (strain Paris)).